The following is a 314-amino-acid chain: Olfactory receptor 52K2 (314 aa).

The Extracellular portion of the chain corresponds to 1–27 (MSASNITLTHPTAFLLVGIPGLEHLHI). The N-linked (GlcNAc...) asparagine glycan is linked to asparagine 5. Residues 28 to 48 (WISIPFCLAYTLALLGNCTLL) traverse the membrane as a helical segment. The Cytoplasmic segment spans residues 49–56 (LIIQADAA). Residues 57 to 77 (LHEPMYLFLAMLAAIDLVLSS) traverse the membrane as a helical segment. Over 78-101 (SALPKMLAIFWFRDREINFFACLA) the chain is Extracellular. Cysteine 99 and cysteine 191 are joined by a disulfide. A helical transmembrane segment spans residues 102–122 (QMFFLHSFSIMESAVLLAMAF). Residues 123–141 (DRYVAICKPLHYTKVLTGS) are Cytoplasmic-facing. The helical transmembrane segment at 142-162 (LITKIGMAAVARAVTLMTPLP) threads the bilayer. Topologically, residues 163-198 (FLLRCFHYCRGPVIAHCYCEHMAVVRLACGDTSFNN) are extracellular. Residues 199-219 (IYGIAVAMFIVVLDLLLVILS) form a helical membrane-spanning segment. Residues 220-239 (YIFILQAVLLLASQEARYKA) are Cytoplasmic-facing. The helical transmembrane segment at 240–260 (FGTCVSHIGAILAFYTTVVIS) threads the bilayer. The Extracellular segment spans residues 261–275 (SVMHRVARHAAPHVH). A helical membrane pass occupies residues 276–296 (ILLANFYLLFPPMVNPIIYGV). Residues 297-314 (KTKQIRESILGVFPRKDM) are Cytoplasmic-facing.

It belongs to the G-protein coupled receptor 1 family.

It localises to the cell membrane. In terms of biological role, odorant receptor. The protein is Olfactory receptor 52K2 (OR52K2) of Homo sapiens (Human).